We begin with the raw amino-acid sequence, 306 residues long: Glutathione transport system permease protein GsiC (306 aa).

The Cytoplasmic segment spans residues 1-8; sequence MLNYVIKR. A helical transmembrane segment spans residues 9–29; that stretch reads LLGLIPTLFIVSVLVFLFVHM. Residues 30–102 are Periplasmic-facing; that stretch reads LPGDPARLIA…SRFMPTLWLT (73 aa). The region spanning 95 to 292 is the ABC transmembrane type-1 domain; the sequence is FMPTLWLTIT…LEFILINLVV (198 aa). Residues 103 to 123 traverse the membrane as a helical segment; it reads ITSMVWAVIFGMAAGIIAAVW. Topologically, residues 124–134 are cytoplasmic; it reads RNRWPDRLSMT. The helical transmembrane segment at 135–155 threads the bilayer; it reads IAVSGISFPAFALGMFLIQVF. The Periplasmic segment spans residues 156–168; sequence SVELGWLPTVGAD. A helical transmembrane segment spans residues 169-189; the sequence is SWQHYILPSLTLGAAVAAVMA. Over 190–228 the chain is Cytoplasmic; the sequence is RFTRASFVDVLSEDYMRTARAKGVSETWVVLKHGLRNAM. Residues 229-249 form a helical membrane-spanning segment; sequence IPVVTMMGLQFGFLLGGSIVV. The Periplasmic portion of the chain corresponds to 250–277; that stretch reads EKVFNWPGLGRLLVDSVEMRDYPVIQAE. Residues 278-298 traverse the membrane as a helical segment; sequence ILLFSLEFILINLVVDVLYAA. The Cytoplasmic portion of the chain corresponds to 299-306; sequence INPAIRYK.

It belongs to the binding-protein-dependent transport system permease family. As to quaternary structure, the complex is composed of two ATP-binding proteins (GsiA), two transmembrane proteins (GsiC and GsiD) and a solute-binding protein (GsiB).

It localises to the cell inner membrane. Its function is as follows. Part of the ABC transporter complex GsiABCD involved in glutathione import. Probably responsible for the translocation of the substrate across the membrane. This chain is Glutathione transport system permease protein GsiC, found in Shigella flexneri serotype 5b (strain 8401).